Reading from the N-terminus, the 400-residue chain is ATP-dependent rRNA helicase RRP3 (400 aa).

A Q motif motif is present at residues methionine 1–arginine 29. Positions isoleucine 32–isoleucine 202 constitute a Helicase ATP-binding domain. Residue serine 45–threonine 52 coordinates ATP. The DEAD box motif lies at aspartate 150–aspartate 153. The 145-residue stretch at alanine 229–glycine 373 folds into the Helicase C-terminal domain.

It belongs to the DEAD box helicase family. DDX47/RRP3 subfamily. In terms of assembly, interacts with the SSU processome.

It is found in the nucleus. The enzyme catalyses ATP + H2O = ADP + phosphate + H(+). Its function is as follows. ATP-dependent rRNA helicase required for pre-ribosomal RNA processing. Involved in the maturation of the 35S-pre-rRNA and to its cleavage to mature 18S rRNA. This Encephalitozoon cuniculi (strain GB-M1) (Microsporidian parasite) protein is ATP-dependent rRNA helicase RRP3.